The chain runs to 257 residues: (R)-2-haloacid dehalogenase (257 aa).

This sequence belongs to the HAD-like hydrolase superfamily. S-2-haloalkanoic acid dehalogenase family.

It catalyses the reaction an (R)-2-haloacid + H2O = a (2S)-2-hydroxycarboxylate + a halide anion + H(+). Its function is as follows. Catalyzes the hydrolytic dehalogenation of small (R)-2-haloalkanoic acids to yield the corresponding (S)-2-hydroxyalkanoic acids. Acts on acids of short chain lengths, C(2) to C(4), with inversion of configuration at C-2. The protein is (R)-2-haloacid dehalogenase (dehI) of Rhizobium sp. (strain NHG3).